The chain runs to 371 residues: 3-dehydroquinate synthase (371 aa).

NAD(+) contacts are provided by residues 72–77, 106–110, 130–131, lysine 143, lysine 152, and 170–173; these read DGEEHK, GVVGD, TT, and TLKT. The Zn(2+) site is built by glutamate 185, histidine 248, and histidine 265.

It belongs to the sugar phosphate cyclases superfamily. Dehydroquinate synthase family. Co(2+) serves as cofactor. It depends on Zn(2+) as a cofactor. The cofactor is NAD(+).

Its subcellular location is the cytoplasm. It catalyses the reaction 7-phospho-2-dehydro-3-deoxy-D-arabino-heptonate = 3-dehydroquinate + phosphate. Its pathway is metabolic intermediate biosynthesis; chorismate biosynthesis; chorismate from D-erythrose 4-phosphate and phosphoenolpyruvate: step 2/7. Catalyzes the conversion of 3-deoxy-D-arabino-heptulosonate 7-phosphate (DAHP) to dehydroquinate (DHQ). The chain is 3-dehydroquinate synthase from Pelotomaculum thermopropionicum (strain DSM 13744 / JCM 10971 / SI).